The following is a 795-amino-acid chain: Endoplasmin (795 aa).

Positions 1–21 (MKSAWALALACTLLLAASVTA) are cleaved as a signal peptide. Residues 41–43 (SRT) carry the SRT pseudosubstrate motif motif. N-linked (GlcNAc...) asparagine glycosylation is found at Asn61 and Asn106. ATP is bound by residues Asn106, Asp148, Asn161, and Phe198. Asn216 carries an N-linked (GlcNAc...) asparagine glycan. A compositionally biased stretch (acidic residues) spans 289-316 (EEPVEEEEAKEEKEETDDNEAAVEEEEE). The segment at 289 to 322 (EEPVEEEEAKEEKEETDDNEAAVEEEEEEKKPKT) is disordered. N-linked (GlcNAc...) asparagine glycosylation is found at Asn444, Asn480, and Asn501. The disordered stretch occupies residues 751 to 795 (DAKVEEEPEEPEDAAEEAEQDEEEVDADAEDSETQKESTDVKDEL). A compositionally biased stretch (acidic residues) spans 756–782 (EEPEEPEDAAEEAEQDEEEVDADAEDS). Over residues 783-795 (ETQKESTDVKDEL) the composition is skewed to basic and acidic residues. The short motif at 792-795 (KDEL) is the Prevents secretion from ER element.

Belongs to the heat shock protein 90 family. Homodimer; disulfide-linked.

The protein localises to the endoplasmic reticulum lumen. Its subcellular location is the sarcoplasmic reticulum lumen. It carries out the reaction ATP + H2O = ADP + phosphate + H(+). Its function is as follows. ATP-dependent chaperone involved in the processing of proteins in the endoplasmic reticulum, regulating their transport. This chain is Endoplasmin (HSP90B1), found in Gallus gallus (Chicken).